We begin with the raw amino-acid sequence, 129 residues long: uncharacterized protein (129 aa).

The signal sequence occupies residues 1 to 24 (MAFGWHSMHGSIIWFLQIAQLSTA). 2 helical membrane-spanning segments follow: residues 38-58 (ISNL…CAIF) and 95-115 (IAHI…FTPL).

Its subcellular location is the membrane. This is an uncharacterized protein from Saccharomyces cerevisiae (strain ATCC 204508 / S288c) (Baker's yeast).